We begin with the raw amino-acid sequence, 505 residues long: Trans-cinnamate 4-monooxygenase (505 aa).

Residues 3–23 (LLLLEKTLLGLFIAAITAIAI) form a helical membrane-spanning segment. (E)-cinnamate is bound by residues 213-218 (RSRLAQ) and alanine 306. Residue cysteine 447 participates in heme binding.

Belongs to the cytochrome P450 family. Heme is required as a cofactor.

The protein localises to the membrane. The catalysed reaction is (E)-cinnamate + reduced [NADPH--hemoprotein reductase] + O2 = (E)-4-coumarate + oxidized [NADPH--hemoprotein reductase] + H2O + H(+). The protein operates within phenylpropanoid metabolism; trans-4-coumarate biosynthesis; trans-4-coumarate from trans-cinnamate: step 1/1. Catalyzes the first oxidative step of the phenylpropanoid pathway in higher plants by transforming trans-cinnamate into p-coumarate. The compounds formed by this pathway are essential components for lignification, pollination, and defense against ultraviolet light, predators and pathogens. This chain is Trans-cinnamate 4-monooxygenase (CYP73A14), found in Glycyrrhiza echinata (Licorice).